Consider the following 441-residue polypeptide: Hydroxycinnamoyl-CoA:5-hydroxyanthranilate N-hydroxycinnamoyltransferase HHT1 (441 aa).

Residues histidine 158 and aspartate 388 each act as proton acceptor in the active site.

This sequence belongs to the plant acyltransferase family.

The enzyme catalyses 5-hydroxyanthranilate + (E)-4-coumaroyl-CoA = avenanthramide A + CoA. The catalysed reaction is 5-hydroxyanthranilate + (E)-caffeoyl-CoA = avenanthramide C + CoA. Functionally, involved in the biosynthesis of avenanthramide phytoalexins, which are phenolic alkaloids found mainly in oats. Catalyzes the N-acylation of 5-hydroxyanthranilate with 4-coumaroyl-CoA or caffeoyl-CoA as acyl donors, forming avenanthramide A and avenanthramide C, respectively. Does not accept feruloyl-CoA as a substrate. This is Hydroxycinnamoyl-CoA:5-hydroxyanthranilate N-hydroxycinnamoyltransferase HHT1 from Avena sativa (Oat).